Consider the following 159-residue polypeptide: Ribosomal RNA large subunit methyltransferase H (159 aa).

S-adenosyl-L-methionine-binding positions include Leu-76, Gly-108, and 127 to 132; that span reads FSNMTF.

Belongs to the RNA methyltransferase RlmH family. As to quaternary structure, homodimer.

It localises to the cytoplasm. It carries out the reaction pseudouridine(1915) in 23S rRNA + S-adenosyl-L-methionine = N(3)-methylpseudouridine(1915) in 23S rRNA + S-adenosyl-L-homocysteine + H(+). Functionally, specifically methylates the pseudouridine at position 1915 (m3Psi1915) in 23S rRNA. The sequence is that of Ribosomal RNA large subunit methyltransferase H from Staphylococcus epidermidis (strain ATCC 35984 / DSM 28319 / BCRC 17069 / CCUG 31568 / BM 3577 / RP62A).